The sequence spans 304 residues: Flagellin (304 aa).

It belongs to the bacterial flagellin family. As to quaternary structure, interacts with FliW in a 1:1 complex. Forms a 3-way complex of Hag, FliS and FliW, in which Flis and FliW do not directly interact.

It localises to the secreted. Its subcellular location is the bacterial flagellum. The protein resides in the cell wall. Functionally, flagellin is the subunit which polymerizes to form the filaments of bacterial flagella. Assembly into flagella requires FliW. Acts as a homeostatic autoinhibitory regulator to control its own cytoplasmic levels. Partner switching by flagellin between FliW and CsrA provides a flagellar assembly checkpoint to tightly control the timing of flagellin synthesis. Flagellin binds to assembly factor FliW, freeing translation regulator CsrA to repress translation of the flagellin mRNA. When the flagellar hook is assembled flagellin is secreted, depleting intracellular flagellin, which frees FliW to interact with CsrA. This derepresses flagellin translation and provides protein for flagellar assembly. Once the flagellar filament is completed cytoplasmic flagellin levels rise and CsrA translation repression of flagellin reinitiates. In Bacillus subtilis (strain 168), this protein is Flagellin.